An 82-amino-acid chain; its full sequence is MVKIRLSRFGSTHNPHYRIVVTDARRPRDGGYIENLGHYDPRKTTETYLKVNTERAAYWLAQGAQPTQTARRLLKAQGVKVA.

The protein belongs to the bacterial ribosomal protein bS16 family.

The polypeptide is Small ribosomal subunit protein bS16 (Deinococcus deserti (strain DSM 17065 / CIP 109153 / LMG 22923 / VCD115)).